Reading from the N-terminus, the 284-residue chain is MAIRGPEASSFFPLTLVFSVGFFCARFFLDRLVYKPLAAYCFSSKASKLMNDEVRQAKIVKFSESIWKLTYYGSVQAWVLLIIKQEPWSLDTMQYFEGWPNQYMTSSLMLFYMCQCGFYIYSIFALVAWETRRKDFAVMMSHHVVTSILIGYAYLTGFFRIGTIILALHDASDVFLETAKLCKYTEKELGASLFFGLFALSWLLLRLIYFPFWIIKTSSYQSIISLRKLEKFPTTLYYIFNTMLLTLLVFHIYWWKLICLMIMKQLNNKGQVGEDVRSDSEDEE.

The next 6 membrane-spanning stretches (helical) occupy residues 9-29 (SSFF…RFFL), 69-89 (LTYY…EPWS), 108-128 (LMLF…ALVA), 148-168 (ILIG…ILAL), 195-215 (FGLF…FWII), and 243-263 (MLLT…LMIM). Residues 60-267 (VKFSESIWKL…ICLMIMKQLN (208 aa)) enclose the TLC domain.

Its subcellular location is the endoplasmic reticulum membrane. Functionally, mediates resistance to sphinganine-analog mycotoxins (SAMs) by restoring the sphingolipid biosynthesis. Could salvage the transport of GPI-anchored proteins from the endoplasmic reticulum to the Golgi apparatus in ceramides-depleted cells after SAM exposure. The protein is ASC1-like protein 3 of Oryza sativa subsp. japonica (Rice).